A 302-amino-acid chain; its full sequence is N-acetyl-D-glucosamine kinase (302 aa).

ATP contacts are provided by residues 4–11 and 133–140; these read GFDVGGTK and GFGGGFIY. Zn(2+) is bound by residues His157, Cys177, Cys179, and Cys184.

Belongs to the ROK (NagC/XylR) family. NagK subfamily.

The enzyme catalyses N-acetyl-D-glucosamine + ATP = N-acetyl-D-glucosamine 6-phosphate + ADP + H(+). It functions in the pathway cell wall biogenesis; peptidoglycan recycling. Catalyzes the phosphorylation of N-acetyl-D-glucosamine (GlcNAc) derived from cell-wall degradation, yielding GlcNAc-6-P. The sequence is that of N-acetyl-D-glucosamine kinase from Vibrio parahaemolyticus serotype O3:K6 (strain RIMD 2210633).